Reading from the N-terminus, the 705-residue chain is Probable cyclic nucleotide-gated ion channel 16 (705 aa).

The Cytoplasmic portion of the chain corresponds to 1–57 (MSNLHLYTSARFRNFPTTFSLRHHHNDPNNQRRRSIFSKLRDKTLDPGGDLITRWNH). Residues 58–78 (IFLITCLLALFLDPLYFYLPI) form a helical membrane-spanning segment. Residues 79 to 91 (VQAGTACMSIDVR) are Extracellular-facing. The helical transmembrane segment at 92 to 112 (FGIFVTCFRNLADLSFLIHIL) threads the bilayer. Over 113 to 147 (LKFKTAFVSKSSRVFGRGELVMDRREIAIRYLKSE) the chain is Cytoplasmic. The chain crosses the membrane as a helical span at residues 148–168 (FVIDLAATLPLPQIMIWFVIP). Residues 169-180 (NAGEFRYAAHQN) are Extracellular-facing. A helical membrane pass occupies residues 181-201 (HTLSLIVLIQYVPRFLVMLPL). The Cytoplasmic portion of the chain corresponds to 202 to 222 (NRRIIKATGVAAKTAWSGAAY). The helical transmembrane segment at 223–243 (NLILYLLVSHVLGSVWYVLSI) threads the bilayer. The Extracellular segment spans residues 244 to 353 (QRQHECWRRE…LAASTLSSET (110 aa)). The helical transmembrane segment at 354–374 (IFSCFICVAGLVFFSHLIGNV) threads the bilayer. Topologically, residues 375 to 705 (QNYLQSTTAR…MFKPEDPGFF (331 aa)) are cytoplasmic. A nucleoside 3',5'-cyclic phosphate is bound by residues 457-580 (FFAQ…HSKK) and Glu528. The calmodulin-binding stretch occupies residues 573–588 (FRRLHSKKLQHAFRYY). Positions 593 to 622 (RAWGTCFIQAAWRRYMKRKLAMELARQEEE) constitute an IQ domain. Disordered stretches follow at residues 636-655 (EEDM…SNNQ) and 672-705 (RGVL…PGFF). Residues 642 to 655 (SNNNNGDENSSNNQ) are compositionally biased toward low complexity.

This sequence belongs to the cyclic nucleotide-gated cation channel (TC 1.A.1.5) family. In terms of assembly, homotetramer or heterotetramer.

It localises to the cell membrane. Putative cyclic nucleotide-gated ion channel. The polypeptide is Probable cyclic nucleotide-gated ion channel 16 (CNGC16) (Arabidopsis thaliana (Mouse-ear cress)).